The chain runs to 430 residues: Adenylosuccinate synthetase (430 aa).

Residues 12–18 (GDEGKGK) and 40–42 (GHT) contribute to the GTP site. Aspartate 13 serves as the catalytic Proton acceptor. The Mg(2+) site is built by aspartate 13 and glycine 40. IMP-binding positions include 13–16 (DEGK), 38–41 (NAGH), threonine 128, arginine 142, glutamine 223, threonine 238, and arginine 302. Catalysis depends on histidine 41, which acts as the Proton donor. 298–304 (TTTGRPR) contacts substrate. Residues arginine 304, 330–332 (SID), and 412–414 (SVG) each bind GTP.

The protein belongs to the adenylosuccinate synthetase family. In terms of assembly, homodimer. Mg(2+) serves as cofactor.

It is found in the cytoplasm. The enzyme catalyses IMP + L-aspartate + GTP = N(6)-(1,2-dicarboxyethyl)-AMP + GDP + phosphate + 2 H(+). It functions in the pathway purine metabolism; AMP biosynthesis via de novo pathway; AMP from IMP: step 1/2. Functionally, plays an important role in the de novo pathway of purine nucleotide biosynthesis. Catalyzes the first committed step in the biosynthesis of AMP from IMP. In Streptococcus pyogenes serotype M1, this protein is Adenylosuccinate synthetase.